A 289-amino-acid chain; its full sequence is Phosphatidylinositol:ceramide inositolphosphotransferase 3 (289 aa).

A run of 5 helical transmembrane segments spans residues leucine 33–tyrosine 53, alanine 77–histidine 97, valine 115–leucine 135, valine 169–valine 189, and arginine 199–serine 219. The active site involves histidine 181. Catalysis depends on residues histidine 222 and aspartate 226. The helical transmembrane segment at tyrosine 223–serine 243 threads the bilayer. Positions alanine 249 to histidine 289 are disordered. The segment covering lysine 266–leucine 279 has biased composition (basic and acidic residues). A compositionally biased stretch (polar residues) spans leucine 280–histidine 289.

It belongs to the sphingomyelin synthase family. Mostly expressed in stems and flowers, and, to a lower extent, in leaves, roots and siliques.

It is found in the membrane. In terms of biological role, catalyzes the transfer of the phosphorylinositol group from phosphatidylinositol (PI) to phytoceramide, an essential step in sphingolipid biosynthesis. In Arabidopsis thaliana (Mouse-ear cress), this protein is Phosphatidylinositol:ceramide inositolphosphotransferase 3 (IPCS3).